The sequence spans 130 residues: Fluoride-specific ion channel FluC (130 aa).

Transmembrane regions (helical) follow at residues 2 to 22, 36 to 56, 71 to 91, and 100 to 120; these read GLLL…RFAL, GILL…AFLI, FLLV…SLDI, and IFIA…AVIL. Na(+)-binding residues include glycine 79 and threonine 82.

This sequence belongs to the fluoride channel Fluc/FEX (TC 1.A.43) family.

The protein localises to the cell inner membrane. The catalysed reaction is fluoride(in) = fluoride(out). Its activity is regulated as follows. Na(+) is not transported, but it plays an essential structural role and its presence is essential for fluoride channel function. Its function is as follows. Fluoride-specific ion channel. Important for reducing fluoride concentration in the cell, thus reducing its toxicity. In Francisella tularensis subsp. mediasiatica (strain FSC147), this protein is Fluoride-specific ion channel FluC.